We begin with the raw amino-acid sequence, 138 residues long: MLQPTRLKYRKQQKGRNTGIATRGNKVSFGEFGLKAVGRGRLTARQIEAARRAMTRHIKRGGRIWIRVFPDKPITEKPIQVRMGGGKGNVEYYIAEIKPGKVLYEMDGVPEELAREAFELAAAKLPIPTTFVVRQVGQ.

This sequence belongs to the universal ribosomal protein uL16 family. In terms of assembly, part of the 50S ribosomal subunit.

In terms of biological role, binds 23S rRNA and is also seen to make contacts with the A and possibly P site tRNAs. The sequence is that of Large ribosomal subunit protein uL16 from Neisseria gonorrhoeae (strain ATCC 700825 / FA 1090).